Consider the following 179-residue polypeptide: Protein HEADING DATE 3A (179 aa).

Belongs to the phosphatidylethanolamine-binding protein family. In terms of tissue distribution, expressed in the inner region of the SAM, stem and leaf blade vascular tissues (at protein level).

Its subcellular location is the cytoplasm. It localises to the nucleus. Functionally, probable mobile flower-promoting signal (florigen) that moves from the leaf to the shoot apical meristem (SAM) and induces flowering. Promotes the transition from vegetative growth to flowering downstream of HD1 and EHD1 under short day (SD) conditions. Acts upstream of MADS14 and MADS15. This is Protein HEADING DATE 3A (HD3A) from Oryza sativa subsp. japonica (Rice).